Here is a 310-residue protein sequence, read N- to C-terminus: Porphobilinogen deaminase (310 aa).

Position 240 is an S-(dipyrrolylmethanemethyl)cysteine (Cys240).

The protein belongs to the HMBS family. In terms of assembly, monomer. Dipyrromethane is required as a cofactor.

It catalyses the reaction 4 porphobilinogen + H2O = hydroxymethylbilane + 4 NH4(+). The protein operates within porphyrin-containing compound metabolism; protoporphyrin-IX biosynthesis; coproporphyrinogen-III from 5-aminolevulinate: step 2/4. Tetrapolymerization of the monopyrrole PBG into the hydroxymethylbilane pre-uroporphyrinogen in several discrete steps. The protein is Porphobilinogen deaminase of Desulfosudis oleivorans (strain DSM 6200 / JCM 39069 / Hxd3) (Desulfococcus oleovorans).